Here is a 92-residue protein sequence, read N- to C-terminus: N(2)-fixation sustaining protein CowN (92 aa).

The protein belongs to the CowN family.

In terms of biological role, is required to sustain N(2)-dependent growth in the presence of low levels of carbon monoxide (CO). Probably acts by protecting the N(2) fixation ability of the nitrogenase complex, which is inactivated in the presence of CO. This is N(2)-fixation sustaining protein CowN from Rhodopseudomonas palustris (strain BisA53).